Reading from the N-terminus, the 380-residue chain is Kappa-type opioid receptor (380 aa).

The Extracellular portion of the chain corresponds to Met1–Ala57. 2 N-linked (GlcNAc...) asparagine glycosylation sites follow: Asn25 and Asn39. Residues Ile58–Ile85 traverse the membrane as a helical segment. At Arg86–Asn95 the chain is on the cytoplasmic side. Residues Ile96–Tyr119 form a helical membrane-spanning segment. Over Leu120–Lys132 the chain is Extracellular. A disulfide bridge links Cys131 with Cys210. Residues Ile133 to Val154 form a helical membrane-spanning segment. At Asp155–Leu173 the chain is on the cytoplasmic side. Residues Lys174 to Leu196 traverse the membrane as a helical segment. The Extracellular portion of the chain corresponds to Gly197–Trp222. Residues Asp223–Thr247 form a helical membrane-spanning segment. At Leu248 to Lys274 the chain is on the cytoplasmic side. A helical membrane pass occupies residues Leu275–Val296. Over Glu297–Ser311 the chain is Extracellular. The chain crosses the membrane as a helical span at residues Tyr312–Leu333. The Cytoplasmic segment spans residues Asp334–Val380. Cys345 is lipidated: S-palmitoyl cysteine.

This sequence belongs to the G-protein coupled receptor 1 family. In terms of assembly, interacts with NHERF1. Interacts with GABARAPL1.

The protein localises to the cell membrane. Its function is as follows. G-protein coupled opioid receptor that functions as a receptor for endogenous alpha-neoendorphins and dynorphins, but has low affinity for beta-endorphins. Also functions as a receptor for various synthetic opioids and for the psychoactive diterpene salvinorin A. Ligand binding causes a conformation change that triggers signaling via guanine nucleotide-binding proteins (G proteins) and modulates the activity of down-stream effectors, such as adenylate cyclase. Signaling leads to the inhibition of adenylate cyclase activity. Inhibits neurotransmitter release by reducing calcium ion currents and increasing potassium ion conductance. Plays a role in the perception of pain. Plays a role in mediating reduced physical activity upon treatment with synthetic opioids. Plays a role in the regulation of salivation in response to synthetic opioids. May play a role in arousal and regulation of autonomic and neuroendocrine functions. In Rattus norvegicus (Rat), this protein is Kappa-type opioid receptor (Oprk1).